The chain runs to 377 residues: Diels-Alderase fsa2 (377 aa).

The protein belongs to the Diels-Alderase family.

The enzyme catalyses (5S)-3-[(2E,6R,8E,10E,12E)-2,6-dimethyltetradeca-2,8,10,12-tetraenoyl]-5-(hydroxymethyl)pyrrolidine-2,4-dione = trichosetin. It participates in mycotoxin biosynthesis. Functionally, diels-Alderase; part of the gene cluster that mediates the biosynthesis of equisetin, a trans-fused decalin-containing tetramic acid with antimicrobial activity. The PKS module of eqxS together with the enoylreductase eqxC catalyze the formation of the polyketide unit which is then conjugated to L-serine by the condensation domain of the eqxS NRPS module. Activity of the Dieckmann cyclase domain (RED) results in release of the Dieckmann product intermediate. Diels-Alderase eqx3 is involved in endo-selective Diels-Alder cycloaddition to form the decalin ring, leading to the production of N-desmethylequisetin also called trichosetin. Subsequent N-methylation is carried out by eqxD to give equisetin. The protein is Diels-Alderase fsa2 of Fusarium heterosporum.